The primary structure comprises 942 residues: Chitin synthase 2 (942 aa).

Basic and acidic residues predominate over residues 1-13 (MAYHYSHDSDRRQ). The tract at residues 1-132 (MAYHYSHDSD…PSHTDYSDED (132 aa)) is disordered. Residues 18-33 (YNYPSNYSNPSQYSIP) show a composition bias toward low complexity. Asn23 carries N-linked (GlcNAc...) asparagine glycosylation. Positions 71–80 (PQPTASSMTS) are enriched in polar residues. Asn587 carries an N-linked (GlcNAc...) asparagine glycan. 4 helical membrane passes run 590-610 (IFAA…GHGI), 625-645 (FNLL…FFLI), 663-683 (IFQV…VCSL), and 696-716 (FCIF…GWTV). N-linked (GlcNAc...) asparagine glycosylation occurs at Asn736. 2 helical membrane-spanning segments follow: residues 739–759 (FVQL…SSLL) and 770–790 (FVQY…YAMC). Asn803 carries N-linked (GlcNAc...) asparagine glycosylation. 2 consecutive transmembrane segments (helical) span residues 873-893 (VVLL…SSTF) and 916-936 (IFYA…LYLI).

This sequence belongs to the chitin synthase family. Class III subfamily.

It localises to the cell membrane. The enzyme catalyses [(1-&gt;4)-N-acetyl-beta-D-glucosaminyl](n) + UDP-N-acetyl-alpha-D-glucosamine = [(1-&gt;4)-N-acetyl-beta-D-glucosaminyl](n+1) + UDP + H(+). Functionally, polymerizes chitin, a structural polymer of the cell wall and septum, by transferring the sugar moiety of UDP-GlcNAc to the non-reducing end of the growing chitin polymer. This Cryptococcus neoformans var. grubii serotype A (strain H99 / ATCC 208821 / CBS 10515 / FGSC 9487) (Filobasidiella neoformans var. grubii) protein is Chitin synthase 2.